Consider the following 102-residue polypeptide: Small ribosomal subunit protein uS10 (102 aa).

It belongs to the universal ribosomal protein uS10 family. In terms of assembly, part of the 30S ribosomal subunit.

Its function is as follows. Involved in the binding of tRNA to the ribosomes. In Bifidobacterium adolescentis (strain ATCC 15703 / DSM 20083 / NCTC 11814 / E194a), this protein is Small ribosomal subunit protein uS10.